The chain runs to 579 residues: Carboxysome shell carbonic anhydrase (579 aa).

The interval 72 to 95 is disordered; it reads GGGRVRSARDQRQPGWVRRDKGAT. Over residues 78 to 93 the composition is skewed to basic and acidic residues; it reads SARDQRQPGWVRRDKG. Zn(2+) is bound at residue C240. Catalysis depends on D242, which acts as the Proton acceptor. The Zn(2+) site is built by H308 and C319.

Belongs to the beta-class carbonic anhydrase family. CsoSCA subfamily. In terms of assembly, homodimer. It depends on Zn(2+) as a cofactor.

It localises to the carboxysome. The catalysed reaction is hydrogencarbonate + H(+) = CO2 + H2O. Its activity is regulated as follows. Inhibited by dithiothreitol, partially inhibited by acetatzolamide and cyanide. In terms of biological role, reversible hydration of carbon dioxide. Essential for photosynthetic carbon dioxide fixation, supplies CO(2) to RuBisCO (ribulose bisphosphate carboxylase, cbbL-cbbS) in the carboxysome. The polypeptide is Carboxysome shell carbonic anhydrase (Parasynechococcus marenigrum (strain WH8102)).